Consider the following 248-residue polypeptide: MLESRRLLNYSGEVLLNTPSQLSLPLSLPDDETFDSFYAGENASLVAAIQTAIHQSHGSYIYFWSRDGGGKSHLLHAACAELSLAGDAVGYVPLDKRAYFVPDVLEGMEHLSLVCIDNVQCIAGDEEWELALFNLYNRVLELGRTCLLITGDRPPRQIDLQLPDLASRLDWGQIYRLQPLSDEEKIQALQLRAKLRGFELPEDVGRFVLKRLDRKMRTLFEMLDELDHASIVAQRKLTIPFVKDILKL.

Belongs to the DnaA family. HdA subfamily. In terms of assembly, the active form seems to be an ADP-bound monomer. Forms the RIDA complex (regulatory inactivation of DnaA) of ATP-DnaA, ADP-Hda and the DNA-loaded beta sliding clamp (dnaN).

In terms of biological role, mediates the interaction of DNA replication initiator protein DnaA with DNA polymerase subunit beta sliding clamp (dnaN). Stimulates hydrolysis of ATP-DnaA to ADP-DnaA, rendering DnaA inactive for reinitiation, a process called regulatory inhibition of DnaA or RIDA. The protein is DnaA regulatory inactivator Hda of Proteus mirabilis (strain HI4320).